Consider the following 89-residue polypeptide: Extender of the chronological lifespan protein ecl3 (89 aa).

It belongs to the ecl1 family.

It is found in the nucleus. Its function is as follows. Involved in chronological cell aging. The protein is Extender of the chronological lifespan protein ecl3 (ecl3) of Schizosaccharomyces pombe (strain 972 / ATCC 24843) (Fission yeast).